We begin with the raw amino-acid sequence, 730 residues long: MQAQESLTLEDVAVDFTWEEWQFLSPAQKDLYRDVMLENYSNLVAVGFQASKQDALSKLERGEETCTTEDEIYSRICFEIRKIDDPLQHHLQNRSIQKSVKQCHEQNMFGNIVNQNKGHFLLKQDRDTFDLHEKPLKSILSFENQKRSSGLKNSAEFNGDGKSLFHANHKQFYTEMKFPATAKPINKSQFIKQQRTHNIENAHVCSECGKAFLKLSQFIDHQRVHNGEKPHVCSMCGKAFSRKSRLMDHQRTHTELKHYECTECDKTFLKKSQLNIHQKTHMGEKPYTCSECGKAFIKKCRLIYHQRTHTGEKPHGCSVCGKAFSTKFSLTTHQKTHTGEKPYICSECGKGFIEKRRLIAHHRTHTGEKPFICNKCGKGFTLKNSLITHQQTHTEEKLYTCSECGKGFSMKHCLMVHQRTHTGEKPYKCNECGKGFALKSPLIRHQRTHTGEKPYVCTECRKGFTMKSDLIVHQRTHTAEKPYICNDCGKGFTVKSRLIVHQRTHTGEKPYVCGECGKGFPAKIRLMGHQRTHTGEKPYICDECGKGFTEKSHLNVHRRTHTGEKPYVCSECGKGLTGKSMLIAHQRTHTGEKPYICNECGKGFTMKSTLSIHQQTHTGEKPYKCNECDKSFRKKTCLIQHQRFHTGKTSFACTECGKFSLRKNDLITHQRIHTGEKPYKCSDCGKAFTTKSGLNVHQRKHTGERPYGCSDCGKAFAHLSILVKHKRIHR.

The region spanning Leu7–Phe78 is the KRAB domain. 19 C2H2-type zinc fingers span residues His203–His225, His231–His253, Tyr259–His281, Tyr287–His309, His315–His337, Tyr343–His365, Phe371–His393, Tyr399–His421, Tyr427–His449, Tyr455–His477, Tyr483–His505, Tyr511–His533, Tyr539–His561, Tyr567–His589, Tyr595–His617, Tyr623–His645, Phe651–His673, Tyr679–His701, and Tyr707–His729.

This sequence belongs to the krueppel C2H2-type zinc-finger protein family.

Its subcellular location is the nucleus. In terms of biological role, may be involved in transcriptional regulation. The polypeptide is Zinc finger protein 615 (ZNF615) (Pongo abelii (Sumatran orangutan)).